The primary structure comprises 397 residues: Probable peptidoglycan glycosyltransferase FtsW (397 aa).

The Cytoplasmic segment spans residues 1–30 (MYGLEMLEKIKLEYDKWACLTPKNSLYDRT). Residues 31 to 51 (LVWLFLSLLMIGFIMVTSASI) form a helical membrane-spanning segment. Residues 52–61 (PVSTRLNNDP) are Periplasmic-facing. The chain crosses the membrane as a helical span at residues 62–82 (FHFAIRDSIYLACSLLAFAFV). Over 83-94 (VKIPMRNWEKYN) the chain is Cytoplasmic. The helical transmembrane segment at 95 to 115 (VPLFLLSLLFLASVLIFGRSV) threads the bilayer. The Periplasmic portion of the chain corresponds to 116 to 126 (NGSIRWIQLGP). A helical transmembrane segment spans residues 127-146 (INFQPAELSKLAIICYFSSF). The Cytoplasmic portion of the chain corresponds to 147–158 (YVRKYDEMRNRS). 2 consecutive transmembrane segments (helical) span residues 159 to 179 (ASVI…LLQP) and 180 to 200 (DLGS…IMGA). A topological domain (cytoplasmic) is located at residue Lys201. The chain crosses the membrane as a helical span at residues 202-222 (VMQFLLLIVTASVSFILLVLT). Over 223 to 280 (SEYRLKRVTSFLDPFADAYGDGFQLSNAQMAFGQGQLWGQGLGNSVQKLEYLPEAHTD) the chain is Periplasmic. Residues 281–301 (FVMAVVAEEFGFIGIIFMVVL) traverse the membrane as a helical segment. Residues 302-325 (LLCLSFRAIKISRDALKLEARFRG) lie on the Cytoplasmic side of the membrane. Residues 326 to 346 (FFAFGVAIWVFLQGSVNLGVA) traverse the membrane as a helical segment. At 347–356 (SGALPTKGLT) the chain is on the periplasmic side. A helical transmembrane segment spans residues 357-377 (FPLVSYGGSSLVIMSVAIAIL). Residues 378-397 (LRIDYENRLTRVGHAQIKEP) lie on the Cytoplasmic side of the membrane.

This sequence belongs to the SEDS family. FtsW subfamily.

It localises to the cell inner membrane. It catalyses the reaction [GlcNAc-(1-&gt;4)-Mur2Ac(oyl-L-Ala-gamma-D-Glu-L-Lys-D-Ala-D-Ala)](n)-di-trans,octa-cis-undecaprenyl diphosphate + beta-D-GlcNAc-(1-&gt;4)-Mur2Ac(oyl-L-Ala-gamma-D-Glu-L-Lys-D-Ala-D-Ala)-di-trans,octa-cis-undecaprenyl diphosphate = [GlcNAc-(1-&gt;4)-Mur2Ac(oyl-L-Ala-gamma-D-Glu-L-Lys-D-Ala-D-Ala)](n+1)-di-trans,octa-cis-undecaprenyl diphosphate + di-trans,octa-cis-undecaprenyl diphosphate + H(+). It participates in cell wall biogenesis; peptidoglycan biosynthesis. Functionally, peptidoglycan polymerase that is essential for cell division. The protein is Probable peptidoglycan glycosyltransferase FtsW of Haemophilus ducreyi (strain 35000HP / ATCC 700724).